The chain runs to 511 residues: MGDHTYKKKDSGIYDALNMLVYDYLLKMKYEGSAKIFFNEAGLENFKPGEGMPILAQWYAAFHDISAVRSGLSSNLQDLNRIEGIMMKLENEKRRYQHIGRIDPGAMGYGGTVDPYKQYPMYYQQFDQRKMYEMYGQMSPTADATPRFYDPRKGSMPGPGYRAAQGYPRYHPRFEEQGVPPAKMAPKQFRDEGRSGNVESPSIATNQEGSSPLFESVLGGGDRQFGLKEVMLFVPSEHTAVCSAVAGEHKILLVASSNKTITAVNLLSGKNESTVETDEKQVVEMKIREYEDEIIVVCGIADNELLLVRCTMKGSANLEIAGILRGHTASIVSFEVLDSIHSLDSGGIMRKWTLNGVFEREEVLSGEILHICCISEDNFMFADRQRVYVYDFELNIEMMEILKGQALGIKRIKDGFIVVFRNQAIWLDKRIQKVKVLNVNESIRTATLIDGDLVAASSQNVWFDNGKSLAKIKLHETGIVALDGVNVFRKPSVISCSASGECKIWIKYVGD.

The LisH domain occupies 13–45; sequence IYDALNMLVYDYLLKMKYEGSAKIFFNEAGLEN. Residues 172 to 212 form a disordered region; it reads PRFEEQGVPPAKMAPKQFRDEGRSGNVESPSIATNQEGSSP. A compositionally biased stretch (polar residues) spans 197–210; sequence NVESPSIATNQEGS.

This is an uncharacterized protein from Encephalitozoon cuniculi (strain GB-M1) (Microsporidian parasite).